We begin with the raw amino-acid sequence, 195 residues long: N-(5'-phosphoribosyl)anthranilate isomerase (195 aa).

Belongs to the TrpF family.

It carries out the reaction N-(5-phospho-beta-D-ribosyl)anthranilate = 1-(2-carboxyphenylamino)-1-deoxy-D-ribulose 5-phosphate. It participates in amino-acid biosynthesis; L-tryptophan biosynthesis; L-tryptophan from chorismate: step 3/5. This is N-(5'-phosphoribosyl)anthranilate isomerase from Streptococcus gordonii (strain Challis / ATCC 35105 / BCRC 15272 / CH1 / DL1 / V288).